The primary structure comprises 316 residues: Beta-ketoacyl-[acyl-carrier-protein] synthase III (316 aa).

Catalysis depends on residues Cys-112 and His-243. The ACP-binding stretch occupies residues 244-248; sequence QANIR. Asn-273 is an active-site residue.

It belongs to the thiolase-like superfamily. FabH family. As to quaternary structure, homodimer.

Its subcellular location is the cytoplasm. It carries out the reaction malonyl-[ACP] + acetyl-CoA + H(+) = 3-oxobutanoyl-[ACP] + CO2 + CoA. It participates in lipid metabolism; fatty acid biosynthesis. Functionally, catalyzes the condensation reaction of fatty acid synthesis by the addition to an acyl acceptor of two carbons from malonyl-ACP. Catalyzes the first condensation reaction which initiates fatty acid synthesis and may therefore play a role in governing the total rate of fatty acid production. Possesses both acetoacetyl-ACP synthase and acetyl transacylase activities. Its substrate specificity determines the biosynthesis of branched-chain and/or straight-chain of fatty acids. The sequence is that of Beta-ketoacyl-[acyl-carrier-protein] synthase III from Actinobacillus pleuropneumoniae serotype 5b (strain L20).